Reading from the N-terminus, the 279-residue chain is Dermonecrotic toxin LspiSicTox-betaIE3ii (279 aa).

The active site involves histidine 5. Mg(2+) is bound by residues glutamate 25 and aspartate 27. Histidine 41 serves as the catalytic Nucleophile. Cystine bridges form between cysteine 45-cysteine 51 and cysteine 47-cysteine 190. Mg(2+) is bound at residue aspartate 85.

Belongs to the arthropod phospholipase D family. Class II subfamily. It depends on Mg(2+) as a cofactor. Expressed by the venom gland.

Its subcellular location is the secreted. It catalyses the reaction an N-(acyl)-sphingosylphosphocholine = an N-(acyl)-sphingosyl-1,3-cyclic phosphate + choline. It carries out the reaction an N-(acyl)-sphingosylphosphoethanolamine = an N-(acyl)-sphingosyl-1,3-cyclic phosphate + ethanolamine. The enzyme catalyses a 1-acyl-sn-glycero-3-phosphocholine = a 1-acyl-sn-glycero-2,3-cyclic phosphate + choline. The catalysed reaction is a 1-acyl-sn-glycero-3-phosphoethanolamine = a 1-acyl-sn-glycero-2,3-cyclic phosphate + ethanolamine. In terms of biological role, dermonecrotic toxins cleave the phosphodiester linkage between the phosphate and headgroup of certain phospholipids (sphingolipid and lysolipid substrates), forming an alcohol (often choline) and a cyclic phosphate. This toxin acts on sphingomyelin (SM). It may also act on ceramide phosphoethanolamine (CPE), lysophosphatidylcholine (LPC) and lysophosphatidylethanolamine (LPE), but not on lysophosphatidylserine (LPS), and lysophosphatidylglycerol (LPG). It acts by transphosphatidylation, releasing exclusively cyclic phosphate products as second products. Induces dermonecrosis, hemolysis, increased vascular permeability, edema, inflammatory response, and platelet aggregation. The protein is Dermonecrotic toxin LspiSicTox-betaIE3ii of Loxosceles spinulosa (Recluse spider).